Reading from the N-terminus, the 555-residue chain is Glutamine--tRNA ligase (555 aa).

The short motif at 34–44 (PEPNGYLHIGH) is the 'HIGH' region element. Residues 35–37 (EPN) and 41–47 (HIGHAKS) each bind ATP. Aspartate 67 and tyrosine 212 together coordinate L-glutamine. ATP-binding positions include threonine 231, 261–262 (RL), and 269–271 (MSK). The 'KMSKS' region motif lies at 268-272 (IMSKR).

It belongs to the class-I aminoacyl-tRNA synthetase family. In terms of assembly, monomer.

The protein localises to the cytoplasm. The enzyme catalyses tRNA(Gln) + L-glutamine + ATP = L-glutaminyl-tRNA(Gln) + AMP + diphosphate. The protein is Glutamine--tRNA ligase of Yersinia enterocolitica serotype O:8 / biotype 1B (strain NCTC 13174 / 8081).